A 402-amino-acid polypeptide reads, in one-letter code: mRNA-capping enzyme subunit alpha (402 aa).

The active-site N6-GMP-lysine intermediate is the Lys66.

It belongs to the eukaryotic GTase family. As to quaternary structure, heterodimer. The mRNA-capping enzyme is composed of two separate chains alpha and beta, respectively a mRNA guanylyltransferase and an mRNA 5'-triphosphate monophosphatase.

Its subcellular location is the nucleus. The enzyme catalyses a 5'-end diphospho-ribonucleoside in mRNA + GTP + H(+) = a 5'-end (5'-triphosphoguanosine)-ribonucleoside in mRNA + diphosphate. Second step of mRNA capping. Transfer of the GMP moiety of GTP to the 5'-end of RNA via an enzyme-GMP covalent reaction intermediate. The protein is mRNA-capping enzyme subunit alpha (rnp-2) of Neurospora crassa (strain ATCC 24698 / 74-OR23-1A / CBS 708.71 / DSM 1257 / FGSC 987).